The chain runs to 551 residues: MSQFVGFGVQVELKDGKLIQGKIAKATSKGLTLNDVQFGDGGKSQAFKVRASRLKDLKVLTVASQSGKRKQQRQQQQQNDYNQNRGEHIDWQDDDVSKIKQQEDFDFQRNLGMFNKKDVFAQLKQNDDILPENRLQGHNRKQTQLQQNNYQNDELVIPDAKKDSWNKISSRNEQSTHQSQPQQDAQDDLVLEDDEHEYDVDDIDDPKYLPITQSLNITHLIHSATNSPSINDKTKGTVINDKDQVLAKLGQMIISQSRSNSTSLPAANKQTTIRSKNTKQNIPMATPVQLLEMESITSEFFSINSAGLLENFAVNASFFLKQKLGGRARLRLQNSNPEPLVVILASDSNRSGAKALALGRHLCQTGHIRVITLFTCSQNELQDSMVKKQTDIYKKCGGKIVNSVSSLESAMETLNSPVEIVIDAMQGYDCTLSDLAGTSEVIESRIKSMISWCNKQRGSTKVWSLDIPNGFDAGSGMPDIFFSDRIEATGIICSGWPLIAINNLIANLPSLEDAVLIDIGIPQGAYSQRTSLRKFQNCDLFVTDGSLLLDL.

Residues 1-63 enclose the Sm domain; that stretch reads MSQFVGFGVQ…LKDLKVLTVA (63 aa). The tract at residues 64-92 is disordered; that stretch reads SQSGKRKQQRQQQQQNDYNQNRGEHIDWQ. In terms of domain architecture, DFDF spans 93–129; it reads DDDVSKIKQQEDFDFQRNLGMFNKKDVFAQLKQNDDI. Phosphoserine is present on residues Ser-257 and Ser-261. Positions 288–527 constitute a YjeF N-terminal domain; it reads VQLLEMESIT…DIGIPQGAYS (240 aa).

This sequence belongs to the EDC3 family. In terms of assembly, homodimer. Interacts with DCP2.

It is found in the cytoplasm. The protein localises to the P-body. Stimulates decapping of both stable and unstable mRNA during mRNA decay. Does not affect nonsense-mediated mRNA decay. Required for normal P-body assembly. This is Enhancer of mRNA-decapping protein 3 (EDC3) from Saccharomyces cerevisiae (strain ATCC 204508 / S288c) (Baker's yeast).